Here is a 481-residue protein sequence, read N- to C-terminus: GTPase Obg (481 aa).

The region spanning 2–159 (TTFVDRVVLH…LDAVLELKSV (158 aa)) is the Obg domain. Residues 160 to 330 (ADIGLVGYPS…LMFAMGELVA (171 aa)) enclose the OBG-type G domain. Residues 166–173 (GYPSAGKS), 191–195 (FTTLV), 212–215 (DVPG), 282–285 (NKID), and 311–313 (SAA) contribute to the GTP site. Residues Ser173 and Thr193 each contribute to the Mg(2+) site. The OCT domain occupies 348–426 (PKAVDDAGFT…IGEREFDWHP (79 aa)). The disordered stretch occupies residues 440-481 (DQRLAEKTQRPSAAERLAARKARRQRPGDEPESDELDGDSGE). Acidic residues predominate over residues 469-481 (EPESDELDGDSGE).

The protein belongs to the TRAFAC class OBG-HflX-like GTPase superfamily. OBG GTPase family. In terms of assembly, monomer. Requires Mg(2+) as cofactor.

It localises to the cytoplasm. Functionally, an essential GTPase which binds GTP, GDP and possibly (p)ppGpp with moderate affinity, with high nucleotide exchange rates and a fairly low GTP hydrolysis rate. Plays a role in control of the cell cycle, stress response, ribosome biogenesis and in those bacteria that undergo differentiation, in morphogenesis control. This chain is GTPase Obg, found in Salinispora arenicola (strain CNS-205).